Consider the following 98-residue polypeptide: Ribonuclease kappa (98 aa).

The next 2 membrane-spanning stretches (helical) occupy residues 13–33 (ACGI…GIFF) and 65–85 (VSYN…FSFC).

The protein belongs to the RNase K family. Interacts with the proton translocation complex V0 of the V-ATPase. Interacts with ATP6AP1.

The protein resides in the endomembrane system. It localises to the cytoplasmic vesicle. Its subcellular location is the clathrin-coated vesicle membrane. Endoribonuclease which preferentially cleaves ApU and ApG phosphodiester bonds. Hydrolyzes UpU bonds at a lower rate. Regulates the activity of vacuolar (H+)-ATPase (V-ATPase) which is responsible for acidifying and maintaining the pH of intracellular compartments. Required at an early stage of receptor-mediated endocytosis. The polypeptide is Ribonuclease kappa (Rnasek) (Mus musculus (Mouse)).